Reading from the N-terminus, the 178-residue chain is Large ribosomal subunit protein uL10 (178 aa).

This sequence belongs to the universal ribosomal protein uL10 family. Part of the ribosomal stalk of the 50S ribosomal subunit. The N-terminus interacts with L11 and the large rRNA to form the base of the stalk. The C-terminus forms an elongated spine to which L12 dimers bind in a sequential fashion forming a multimeric L10(L12)X complex.

Functionally, forms part of the ribosomal stalk, playing a central role in the interaction of the ribosome with GTP-bound translation factors. This Gloeothece citriformis (strain PCC 7424) (Cyanothece sp. (strain PCC 7424)) protein is Large ribosomal subunit protein uL10.